Reading from the N-terminus, the 734-residue chain is Photosystem I P700 chlorophyll a apoprotein A2 (734 aa).

Transmembrane regions (helical) follow at residues Ile-46–Ala-69, Leu-135–Gln-158, Leu-175–Ile-199, Met-273–Tyr-291, Leu-330–Tyr-353, Ala-369–Ile-395, Ala-417–His-439, and Phe-517–Val-535. [4Fe-4S] cluster is bound by residues Cys-559 and Cys-568. The next 2 membrane-spanning stretches (helical) occupy residues Ala-575–Trp-596 and Leu-643–Ile-665. His-654, Met-662, and Tyr-670 together coordinate chlorophyll a. Residue Trp-671 participates in phylloquinone binding. A helical membrane pass occupies residues Leu-707–Ala-727.

This sequence belongs to the PsaA/PsaB family. In terms of assembly, the PsaA/B heterodimer binds the P700 chlorophyll special pair and subsequent electron acceptors. PSI consists of a core antenna complex that captures photons, and an electron transfer chain that converts photonic excitation into a charge separation. The eukaryotic PSI reaction center is composed of at least 11 subunits. It depends on P700 is a chlorophyll a/chlorophyll a' dimer, A0 is one or more chlorophyll a, A1 is one or both phylloquinones and FX is a shared 4Fe-4S iron-sulfur center. as a cofactor.

The protein resides in the plastid. It localises to the chloroplast thylakoid membrane. The catalysed reaction is reduced [plastocyanin] + hnu + oxidized [2Fe-2S]-[ferredoxin] = oxidized [plastocyanin] + reduced [2Fe-2S]-[ferredoxin]. Its function is as follows. PsaA and PsaB bind P700, the primary electron donor of photosystem I (PSI), as well as the electron acceptors A0, A1 and FX. PSI is a plastocyanin-ferredoxin oxidoreductase, converting photonic excitation into a charge separation, which transfers an electron from the donor P700 chlorophyll pair to the spectroscopically characterized acceptors A0, A1, FX, FA and FB in turn. Oxidized P700 is reduced on the lumenal side of the thylakoid membrane by plastocyanin. The polypeptide is Photosystem I P700 chlorophyll a apoprotein A2 (Physcomitrium patens (Spreading-leaved earth moss)).